The following is a 447-amino-acid chain: MSKVVHFDASKLTPFVHENELKEMQAMVTAADQELREGTGAGSDFRGWIDLPINYDKDEFDRIKKAAKKIQNDSEVLVGIGIGGSYLGAQASIEFLNSSFYGREKEKYPTVVFCGNSLSGSYLYDLLEWLGDKDFSINIISKSGTTTEPSIAFRVLKDKLIKKYGKEEAAKRIYATTDRAKGALKTEADAEGYEEFVVPDDIGGRFSVLSAVGLLPIAVAGGDIDAMMKGAADARAAYTDPDVSKDNPYQYAALRNILYRKGYTTELLENYEPSLRMFGEWWKQLMGESEGKDQKGIYPSSANFTTDLHSLGQYIQEGRRNLMETVIRVESPEHDVTIPDDKENLDQLNFLSGKTMNYVNDRAYEGVVLAHTDGGVPVMTVDIENQSAHTLGYLIYWFELAVGISGYLNGINPFNQPGVESYKRNMFGLLNKPGYEDLHDDLTKRLK.

Catalysis depends on Glu-288, which acts as the Proton donor. Catalysis depends on residues His-309 and Lys-423.

Belongs to the GPI family.

It is found in the cytoplasm. The catalysed reaction is alpha-D-glucose 6-phosphate = beta-D-fructose 6-phosphate. The protein operates within carbohydrate biosynthesis; gluconeogenesis. It participates in carbohydrate degradation; glycolysis; D-glyceraldehyde 3-phosphate and glycerone phosphate from D-glucose: step 2/4. Functionally, catalyzes the reversible isomerization of glucose-6-phosphate to fructose-6-phosphate. The chain is Glucose-6-phosphate isomerase from Lactobacillus gasseri (strain ATCC 33323 / DSM 20243 / BCRC 14619 / CIP 102991 / JCM 1131 / KCTC 3163 / NCIMB 11718 / NCTC 13722 / AM63).